Consider the following 195-residue polypeptide: uncharacterized protein (195 aa).

Residues 6-66 (VESRKRLLKA…ELITDFHSRV (61 aa)) form the HTH tetR-type domain. The H-T-H motif DNA-binding region spans 29 to 48 (KVSEIVKKAGFTQPSFYLYF).

This is an uncharacterized protein from Bacillus subtilis (strain 168).